The primary structure comprises 99 residues: Ribonuclease P protein component 1 (99 aa).

It belongs to the eukaryotic/archaeal RNase P protein component 1 family. In terms of assembly, consists of a catalytic RNA component and at least 4-5 protein subunits.

The protein resides in the cytoplasm. The catalysed reaction is Endonucleolytic cleavage of RNA, removing 5'-extranucleotides from tRNA precursor.. In terms of biological role, part of ribonuclease P, a protein complex that generates mature tRNA molecules by cleaving their 5'-ends. The polypeptide is Ribonuclease P protein component 1 (Methanococcus vannielii).